Reading from the N-terminus, the 192-residue chain is Holliday junction branch migration complex subunit RuvA (192 aa).

The segment at 1 to 61 (MFEYLKGIVT…DTGITLYGFL (61 aa)) is domain I. Positions 62-137 (SLEDKELFLK…KLGDYVKKST (76 aa)) are domain II. A flexible linker region spans residues 137 to 140 (TAAA). The domain III stretch occupies residues 141-192 (DLTPSLQDALLALVALGYTQKEVDRITPKLAKLPENTADGYVKEALALLLKK).

This sequence belongs to the RuvA family. In terms of assembly, homotetramer. Forms an RuvA(8)-RuvB(12)-Holliday junction (HJ) complex. HJ DNA is sandwiched between 2 RuvA tetramers; dsDNA enters through RuvA and exits via RuvB. An RuvB hexamer assembles on each DNA strand where it exits the tetramer. Each RuvB hexamer is contacted by two RuvA subunits (via domain III) on 2 adjacent RuvB subunits; this complex drives branch migration. In the full resolvosome a probable DNA-RuvA(4)-RuvB(12)-RuvC(2) complex forms which resolves the HJ.

The protein localises to the cytoplasm. Its function is as follows. The RuvA-RuvB-RuvC complex processes Holliday junction (HJ) DNA during genetic recombination and DNA repair, while the RuvA-RuvB complex plays an important role in the rescue of blocked DNA replication forks via replication fork reversal (RFR). RuvA specifically binds to HJ cruciform DNA, conferring on it an open structure. The RuvB hexamer acts as an ATP-dependent pump, pulling dsDNA into and through the RuvAB complex. HJ branch migration allows RuvC to scan DNA until it finds its consensus sequence, where it cleaves and resolves the cruciform DNA. This Lactobacillus johnsonii (strain CNCM I-12250 / La1 / NCC 533) protein is Holliday junction branch migration complex subunit RuvA.